Consider the following 209-residue polypeptide: Probable GTP-binding protein EngB (209 aa).

The 176-residue stretch at 23-198 (NGAEIAFAGR…EKVVAGWLVP (176 aa)) folds into the EngB-type G domain. Residues 31 to 38 (GRSNAGKS), 58 to 62 (GRTQL), 76 to 79 (DLPG), 143 to 146 (TKSD), and 177 to 179 (FSS) each bind GTP. Mg(2+)-binding residues include Ser-38 and Thr-60.

Belongs to the TRAFAC class TrmE-Era-EngA-EngB-Septin-like GTPase superfamily. EngB GTPase family. The cofactor is Mg(2+).

Functionally, necessary for normal cell division and for the maintenance of normal septation. The sequence is that of Probable GTP-binding protein EngB from Azoarcus sp. (strain BH72).